The sequence spans 145 residues: Transcriptional regulator MraZ (145 aa).

2 consecutive SpoVT-AbrB domains span residues 5–49 and 78–121; these read TYNH…LESE and TYKI…AKEV.

Belongs to the MraZ family. Forms oligomers.

The protein localises to the cytoplasm. It localises to the nucleoid. The chain is Transcriptional regulator MraZ from Ureaplasma parvum serovar 3 (strain ATCC 27815 / 27 / NCTC 11736).